The primary structure comprises 988 residues: Exportin-T (988 aa).

This sequence belongs to the exportin family. Expressed in young leaves, growing leaf blades, young floral organs and root tips.

It is found in the nucleus. Its subcellular location is the cytoplasm. Probable tRNA nucleus export receptor which regulates tRNA processing and facilitates tRNA translocation across the nuclear pore complex. Is required for proper activity of the shoot apical meristem (SAM) and correct leaf initiation at different developmental stages, and may play a role in floral patterning. This Arabidopsis thaliana (Mouse-ear cress) protein is Exportin-T (PSD).